An 88-amino-acid chain; its full sequence is Elongation factor 1-beta (88 aa).

The protein belongs to the EF-1-beta/EF-1-delta family.

Functionally, promotes the exchange of GDP for GTP in EF-1-alpha/GDP, thus allowing the regeneration of EF-1-alpha/GTP that could then be used to form the ternary complex EF-1-alpha/GTP/AAtRNA. The chain is Elongation factor 1-beta from Halorubrum lacusprofundi (strain ATCC 49239 / DSM 5036 / JCM 8891 / ACAM 34).